The sequence spans 292 residues: L-serine dehydratase, alpha chain (292 aa).

It belongs to the iron-sulfur dependent L-serine dehydratase family. Heterooctamer of four alpha chains and four beta chains. It depends on [4Fe-4S] cluster as a cofactor.

The enzyme catalyses L-serine = pyruvate + NH4(+). It functions in the pathway carbohydrate biosynthesis; gluconeogenesis. The sequence is that of L-serine dehydratase, alpha chain (sdhA) from Peptoniphilus asaccharolyticus (Peptostreptococcus asaccharolyticus).